Reading from the N-terminus, the 481-residue chain is MAKLVLSLCFLLFSGCCFAFSFREQPQQNECQIQRLNALKPDNRIESEGGFIETWNPNNKPFQCAGVALSRCTLNRNALRRPSYTNAPQEIYIQQGSGIFGMIFPGCPSTFEEPQQKGQSSRPQDRHQKIYHFREGDLIAVPTGFAYWMYNNEDTPVVAVSLIDTNSFQNQLDQMPRRFYLAGNQEQEFLQYQPQKQQGGTQSQKGKRQQEEENEGGSILSGFAPEFLEHAFVVDRQIVRKLQGENEEEEKGAIVTVKGGLSVISPPTEEQQQRPEEEEKPDCDEKDKHCQSQSRNGIDETICTMRLRHNIGQTSSPDIFNPQAGSITTATSLDFPALSWLKLSAQFGSLRKNAMFVPHYNLNANSIIYALNGRALVQVVNCNGERVFDGELQEGQVLIVPQNFAVAARSQSDNFEYVSFKTNDRPSIGNLAGANSLLNALPEEVIQQTFNLRRQQARQVKNNNPFSFLVPPKESQRRVVA.

The first 21 residues, methionine 1–serine 21, serve as a signal peptide directing secretion. Cystine bridges form between cysteine 31–cysteine 64 and cysteine 107–cysteine 303. Residues leucine 36–arginine 240 enclose the Cupin type-1 1 domain. The segment covering glutamine 193 to glutamine 204 has biased composition (low complexity). Disordered stretches follow at residues glutamine 193–serine 218 and glutamate 245–serine 294. Residues glutamine 271–cysteine 290 are compositionally biased toward basic and acidic residues. The Cupin type-1 2 domain maps to histidine 309–arginine 458. Residues proline 472–alanine 481 carry the Vacuolar targeting signal motif. The propeptide occupies arginine 477 to alanine 481.

This sequence belongs to the 11S seed storage protein (globulins) family. Hexamer; each subunit is composed of an acidic and a basic chain derived from a single precursor and linked by a disulfide bond. Post-translationally, during soybean germination, seed storage proteins are hydrolyzed by protease/26S proteasome. As to expression, confined to developing seeds.

The protein localises to the endoplasmic reticulum. It is found in the protein storage vacuole. In terms of biological role, glycinin is the major seed storage protein of soybean. Glycinin basic peptides (GBPs), and, to a lower extent, glycinin exhibit antibacterial activity against Gram-negative and Gram-positive bacteria (e.g. L.monocytogenes, B.subtilis, E.coli and S.enteritidis) by forming pores and aggregating in transmembranes, leading to membrane permeability and, eventually, cell death. The sequence is that of Glycinin G3 from Glycine max (Soybean).